The following is a 388-amino-acid chain: Sphingosine N-acyltransferase-like protein FUM17 (388 aa).

The next 2 helical transmembrane spans lie at 60 to 80 (SWALPLLLTIVLPVIYAIHPV) and 113 to 133 (LWDLAFVAFYANALFLARKFI). Residue asparagine 146 is glycosylated (N-linked (GlcNAc...) asparagine). Residues 151–368 (GKQQRFMEQM…LLRNAYRLLF (218 aa)) form the TLC domain. 4 helical membrane-spanning segments follow: residues 166–186 (FAVMGPFGLYVMKTTPGLWIF), 204–224 (IKFYYLLQAAYWVQQSVVLVL), 241–261 (IITITLIALSYRFHFTHIGIS), and 339–359 (FITFGLLATLQTLNIIWLYCL).

It belongs to the sphingosine N-acyltransferase family.

It is found in the endoplasmic reticulum membrane. Its pathway is mycotoxin biosynthesis. Its function is as follows. Sphingosine N-acyltransferase-like protein; part of the gene cluster that mediates the biosynthesis of fumonisins B1 (FB1), B2 (FB2), B3 (FB3), and B4 (FB4), which are carcinogenic mycotoxins. May contribute to the biosynthesis of ceramide via interaction with Cer3. Does not confer resistance to FB1. The biosynthesis starts with the FUM1-catalyzed carbon chain assembly from one molecule of acetyl-CoA, eight molecules of malonyl-CoA, and two molecules of methionine (in S-adenosyl form). The C18 polyketide chain is released from the enzyme by a nucleophilic attack of a carbanion, which is derived from R-carbon of alanine by decarboxylation, on the carbonyl carbon of polyketide acyl chain. This step is catalyzed by the pyridoxal 5'-phosphate-dependent aminoacyl transferase FUM8. The resultant 3-keto intermediate is then stereospecifically reduced to a 3-hydroxyl product by reductase FUM13. Subsequent oxidations at C-10 by the cytochrome P450 monooxygenase FUM2, C-14 and C-15 by FUM6, FUM12 or FUM15, tricarballylic esterification of the hydroxyl groups on C-14 and C-15 by acyltransferase FUM14, and C-5 hydroxylation by 2-keto-glutarate-dependent dioxygenase FUM3 furnish the biosynthesis of fumonisins. The tricarballylic moieties are most likely derived from the citric acid cycle, and their addition to the carbon backbone may involve FUM7, FUM10, FUM11 and FUM14. This chain is Sphingosine N-acyltransferase-like protein FUM17, found in Gibberella moniliformis (strain M3125 / FGSC 7600) (Maize ear and stalk rot fungus).